Consider the following 392-residue polypeptide: Extracellular metalloproteinase 4 (392 aa).

The propeptide occupies 1-9 (VHSVVDYVS). The N-linked (GlcNAc...) asparagine glycan is linked to asparagine 176. Position 193 (histidine 193) interacts with Zn(2+). The active site involves glutamate 194. Residue histidine 197 coordinates Zn(2+). Residues asparagine 359 and asparagine 385 are each glycosylated (N-linked (GlcNAc...) asparagine).

It belongs to the peptidase M36 family. Zn(2+) serves as cofactor.

The protein localises to the secreted. In terms of biological role, secreted metalloproteinase probably acting as a virulence factor. The protein is Extracellular metalloproteinase 4 (MEP4) of Trichophyton soudanense.